Here is a 361-residue protein sequence, read N- to C-terminus: uncharacterized protein (361 aa).

Gly33–Thr40 lines the ATP pocket.

Belongs to the archaeal ATPase family.

This is an uncharacterized protein from Methanocaldococcus jannaschii (strain ATCC 43067 / DSM 2661 / JAL-1 / JCM 10045 / NBRC 100440) (Methanococcus jannaschii).